We begin with the raw amino-acid sequence, 141 residues long: MRVVLQRVSRARVLVDGQVVGEVSGEGLVAFVGVTPGDGAGEVALLARKIAELRVLRDERSVLDAGAGVLVVSQFTLYADTRKGRRPTWSAAAPRPVAEPVVDALVEALRERGVVVATGVFGADMAVELTNDGPVTILLEA.

The short motif at Gly133–Pro134 is the Gly-cisPro motif, important for rejection of L-amino acids element.

Belongs to the DTD family. In terms of assembly, homodimer.

It localises to the cytoplasm. It catalyses the reaction glycyl-tRNA(Ala) + H2O = tRNA(Ala) + glycine + H(+). The catalysed reaction is a D-aminoacyl-tRNA + H2O = a tRNA + a D-alpha-amino acid + H(+). Its function is as follows. An aminoacyl-tRNA editing enzyme that deacylates mischarged D-aminoacyl-tRNAs. Also deacylates mischarged glycyl-tRNA(Ala), protecting cells against glycine mischarging by AlaRS. Acts via tRNA-based rather than protein-based catalysis; rejects L-amino acids rather than detecting D-amino acids in the active site. By recycling D-aminoacyl-tRNA to D-amino acids and free tRNA molecules, this enzyme counteracts the toxicity associated with the formation of D-aminoacyl-tRNA entities in vivo and helps enforce protein L-homochirality. This chain is D-aminoacyl-tRNA deacylase, found in Beutenbergia cavernae (strain ATCC BAA-8 / DSM 12333 / CCUG 43141 / JCM 11478 / NBRC 16432 / NCIMB 13614 / HKI 0122).